Consider the following 971-residue polypeptide: Outer capsid protein VP2 (971 aa).

This sequence belongs to the orbivirus VP2 family.

The protein resides in the virion. In terms of biological role, the VP2 protein is one of the two proteins (with VP5) which constitute the virus particle outer capsid. It is the major target of the host immunogenic response. In Epizootic hemorrhagic disease virus 1 (EHDV-1), this protein is Outer capsid protein VP2 (Segment-2).